Reading from the N-terminus, the 37-residue chain is Large ribosomal subunit protein bL36 (37 aa).

This sequence belongs to the bacterial ribosomal protein bL36 family.

This is Large ribosomal subunit protein bL36 from Acidovorax ebreus (strain TPSY) (Diaphorobacter sp. (strain TPSY)).